The sequence spans 1035 residues: Kinesin-like protein KIN-4A (1035 aa).

The region spanning 10 to 369 (CVKVAVHVRP…LKYANRARNI (360 aa)) is the Kinesin motor domain. 89–96 (GQTGSGKT) provides a ligand contact to ATP. Coiled coils occupy residues 380-437 (VADE…LRNH) and 498-702 (MLQD…RKSS). Disordered regions lie at residues 697 to 720 (EARK…HMTE), 766 to 787 (VMSG…NTLS), and 882 to 928 (HSES…PLSP). Composition is skewed to polar residues over residues 704–716 (RDNS…SPGS) and 778–787 (NGNSRANTLS). Residues 850–904 (NVAADARCQVREKEMEIKEMKEQMTELVTILRHSESRRRETEKQLKQREQAAVTA) are a coiled coil. Over residues 882-898 (HSESRRRETEKQLKQRE) the composition is skewed to basic and acidic residues. The segment covering 902-926 (VTATTSPGNGNGSVKHSADDSNTPL) has biased composition (polar residues). The Nuclear localization signal motif lies at 971–987 (KKVSIAGQSGKLWRWKR). Residues 1014–1035 (DETMTRTRPRPQLLPHRPQRVM) form a disordered region.

Belongs to the TRAFAC class myosin-kinesin ATPase superfamily. Kinesin family. KIN-4 subfamily. As to quaternary structure, homodimer. Expressed in young tissues with cell divisions, including initiating adventitious roots, primary root tips, flower primordia, intercalary meristems, sub-epidermal regions of young culms and panicles.

The protein localises to the nucleus. It is found in the cytoplasm. It localises to the cytoskeleton. May be regulated by cyclin-dependent kinase A. In terms of biological role, microtubule-dependent motor protein involved in the control of the oriented deposition of cellulose microfibrils. Involved in wall biogenesis and modification, and contributes to cell-cycle progression and cell division. Acts as a transcriptional activator in gibberellic acid (GA) biosynthesis pathway. Binds specifically to the DNA sequence 5'-ACCAACTTGAA-3' of the ent-kaurene oxidase 2 (CYP701A6 or OsKO2) promoter. May regulate CYP701A6 gene expression and mediates cell elongation by regulating the GA biosynthesis pathway. This chain is Kinesin-like protein KIN-4A, found in Oryza sativa subsp. japonica (Rice).